The chain runs to 276 residues: Undecaprenyl-diphosphatase 2 (276 aa).

8 helical membrane-spanning segments follow: residues 1–21 (MSLW…LFPV), 44–64 (QLLP…LWYF), 87–107 (GHLM…GLLL), 114–134 (VFHD…LLWV), 150–170 (MTFK…IPGF), 190–210 (AAEF…VLEL), 220–240 (LMDA…SVRF), and 251–271 (LASF…WFML).

It belongs to the UppP family.

Its subcellular location is the cell inner membrane. The enzyme catalyses di-trans,octa-cis-undecaprenyl diphosphate + H2O = di-trans,octa-cis-undecaprenyl phosphate + phosphate + H(+). In terms of biological role, catalyzes the dephosphorylation of undecaprenyl diphosphate (UPP). Confers resistance to bacitracin. This chain is Undecaprenyl-diphosphatase 2, found in Burkholderia ambifaria (strain ATCC BAA-244 / DSM 16087 / CCUG 44356 / LMG 19182 / AMMD) (Burkholderia cepacia (strain AMMD)).